Consider the following 85-residue polypeptide: Beta-insect depressant toxin BjIT2 (85 aa).

The first 21 residues, 1–21, serve as a signal peptide directing secretion; the sequence is MKLLLLLVISASMLLECLVNA. The 61-residue stretch at 22–82 folds into the LCN-type CS-alpha/beta domain; sequence DGYIRKKDGC…TWKSSTNTCG (61 aa). Disulfide bonds link Cys31/Cys81, Cys35/Cys56, Cys42/Cys63, and Cys46/Cys65. A propeptide spans 83 to 85 (removed by a carboxypeptidase); that stretch reads RKK.

This sequence belongs to the long (4 C-C) scorpion toxin superfamily. Sodium channel inhibitor family. Beta subfamily. Post-translationally, C-terminal basic residues are removed by a carboxypeptidase. In terms of tissue distribution, expressed by the venom gland.

The protein resides in the secreted. Its function is as follows. Depressant insect beta-toxins cause a transient contraction paralysis followed by a slow flaccid paralysis. They bind voltage-independently at site-4 of sodium channels (Nav) and shift the voltage of activation toward more negative potentials thereby affecting sodium channel activation and promoting spontaneous and repetitive firing. This toxin is active only on insects. This is Beta-insect depressant toxin BjIT2 from Hottentotta judaicus (Black scorpion).